The sequence spans 478 residues: GTPase Obg (478 aa).

Positions 2–159 (TTFVDRVELH…RDIVLELKTV (158 aa)) constitute an Obg domain. The disordered stretch occupies residues 61–87 (HHSPHRKATNGQPGAGDNRSGKDGQDL). The OBG-type G domain maps to 160 to 330 (ADVALVGYPS…LSFALAGIIA (171 aa)). GTP contacts are provided by residues 166-173 (GYPSAGKS), 191-195 (FTTLV), 212-215 (DVPG), 282-285 (NKVD), and 311-313 (SAI). Mg(2+) contacts are provided by serine 173 and threonine 193. Residues 348–430 (PRAVDDAGFT…ENAVVFDWEP (83 aa)) form the OCT domain. Residues 436 to 478 (AEMLGRRGEDHRLEEPRPAAQRRRERDAERDDAEKEYDEFDPF) form a disordered region. Basic and acidic residues predominate over residues 439-468 (LGRRGEDHRLEEPRPAAQRRRERDAERDDA). Residues 469–478 (EKEYDEFDPF) show a composition bias toward acidic residues.

Belongs to the TRAFAC class OBG-HflX-like GTPase superfamily. OBG GTPase family. As to quaternary structure, monomer. Requires Mg(2+) as cofactor.

The protein resides in the cytoplasm. In terms of biological role, an essential GTPase which binds GTP, GDP and possibly (p)ppGpp with moderate affinity, with high nucleotide exchange rates and a fairly low GTP hydrolysis rate. Plays a role in control of the cell cycle, stress response, ribosome biogenesis and in those bacteria that undergo differentiation, in morphogenesis control. In Streptomyces griseus subsp. griseus (strain JCM 4626 / CBS 651.72 / NBRC 13350 / KCC S-0626 / ISP 5235), this protein is GTPase Obg.